A 133-amino-acid chain; its full sequence is Small ribosomal subunit protein uS11 (133 aa).

This sequence belongs to the universal ribosomal protein uS11 family. Part of the 30S ribosomal subunit. Interacts with proteins S7 and S18. Binds to IF-3.

Functionally, located on the platform of the 30S subunit, it bridges several disparate RNA helices of the 16S rRNA. Forms part of the Shine-Dalgarno cleft in the 70S ribosome. The polypeptide is Small ribosomal subunit protein uS11 (Methylibium petroleiphilum (strain ATCC BAA-1232 / LMG 22953 / PM1)).